The primary structure comprises 691 residues: Protein simr-1 (691 aa).

Residues 139–204 (EAEITPGTIY…TLFHLGKFTI (66 aa)) enclose the Tudor; degenerate domain. Disordered regions lie at residues 547 to 573 (TGPCGSNTSRPTAQNTANSSINQDMSI) and 588 to 618 (DNLNDTENWPNSEREQSATEMESGAEATTNS). 2 stretches are compositionally biased toward polar residues: residues 549–573 (PCGSNTSRPTAQNTANSSINQDMSI) and 588–598 (DNLNDTENWPN).

It is found in the cytoplasm. The protein resides in the perinuclear region. Functionally, acts downstream of piRNA production to promote mediator complex-dependent endogenous siRNA biogenesis from piRNA-target mRNAs in the RNA interference pathway in germ cells. Not required to identify target mRNA by the piRNA pathway. Plays a role in both spermatogenesis and oogenesis and in maintaining fertility over multiple generations, probably by directing mutator-dependent silencing to piRNA-targeted genes. The polypeptide is Protein simr-1 (Caenorhabditis elegans).